The following is a 214-amino-acid chain: Large ribosomal subunit protein uL16-like (214 aa).

This sequence belongs to the universal ribosomal protein uL16 family. As to quaternary structure, component of the 60S large ribosomal subunit (LSU).

It is found in the cytoplasm. Its function is as follows. Testis-specific component of the ribosome, which is required for the transition from prophase to metaphase in male meiosis I. Compensates for the inactivated X-linked RPL10 paralog during spermatogenesis. The ribosome is a large ribonucleoprotein complex responsible for the synthesis of proteins in the cell. The small ribosomal subunit (SSU) binds messenger RNAs (mRNAs) and translates the encoded message by selecting cognate aminoacyl-transfer RNA (tRNA) molecules. The large subunit (LSU) contains the ribosomal catalytic site termed the peptidyl transferase center (PTC), which catalyzes the formation of peptide bonds, thereby polymerizing the amino acids delivered by tRNAs into a polypeptide chain. The nascent polypeptides leave the ribosome through a tunnel in the LSU and interact with protein factors that function in enzymatic processing, targeting, and the membrane insertion of nascent chains at the exit of the ribosomal tunnel. The sequence is that of Large ribosomal subunit protein uL16-like (RPL10L) from Bos taurus (Bovine).